We begin with the raw amino-acid sequence, 350 residues long: Small ribosomal subunit biogenesis GTPase RsgA (350 aa).

The span at 1 to 17 (MSKNKLSKGQQRRVNAN) shows a compositional bias: polar residues. The disordered stretch occupies residues 1 to 33 (MSKNKLSKGQQRRVNANHQRRLKTSKEKPDYDD). Residues 104 to 273 (TSVLTRPDFY…VIDSPGVREF (170 aa)) enclose the CP-type G domain. GTP-binding positions include 160-163 (NKID) and 214-222 (GQSGVGKSS). Positions 297, 302, 304, and 310 each coordinate Zn(2+).

The protein belongs to the TRAFAC class YlqF/YawG GTPase family. RsgA subfamily. As to quaternary structure, monomer. Associates with 30S ribosomal subunit, binds 16S rRNA. Requires Zn(2+) as cofactor.

It is found in the cytoplasm. Functionally, one of several proteins that assist in the late maturation steps of the functional core of the 30S ribosomal subunit. Helps release RbfA from mature subunits. May play a role in the assembly of ribosomal proteins into the subunit. Circularly permuted GTPase that catalyzes slow GTP hydrolysis, GTPase activity is stimulated by the 30S ribosomal subunit. This chain is Small ribosomal subunit biogenesis GTPase RsgA, found in Escherichia coli (strain SMS-3-5 / SECEC).